The chain runs to 122 residues: Small ribosomal subunit protein uS13 (122 aa).

Positions 93–122 (RKGLPVRGQTTKNNARTRKGKRKTVGSASK) are disordered. Over residues 107–116 (ARTRKGKRKT) the composition is skewed to basic residues.

It belongs to the universal ribosomal protein uS13 family. As to quaternary structure, part of the 30S ribosomal subunit. Forms a loose heterodimer with protein S19. Forms two bridges to the 50S subunit in the 70S ribosome.

Located at the top of the head of the 30S subunit, it contacts several helices of the 16S rRNA. In the 70S ribosome it contacts the 23S rRNA (bridge B1a) and protein L5 of the 50S subunit (bridge B1b), connecting the 2 subunits; these bridges are implicated in subunit movement. Contacts the tRNAs in the A and P-sites. This Wolinella succinogenes (strain ATCC 29543 / DSM 1740 / CCUG 13145 / JCM 31913 / LMG 7466 / NCTC 11488 / FDC 602W) (Vibrio succinogenes) protein is Small ribosomal subunit protein uS13.